A 583-amino-acid polypeptide reads, in one-letter code: CD166 antigen (583 aa).

The N-terminal stretch at 1 to 27 is a signal peptide; it reads MASKVSPSCRLVFCLLISAAVLRPGLG. 2 consecutive Ig-like V-type domains span residues 28 to 120 and 125 to 234; these read WYTV…TEDN and PTLV…KTIY. The Extracellular portion of the chain corresponds to 28 to 527; that stretch reads WYTVNSAYGD…NREKVNDQAK (500 aa). Disulfide bonds link C43-C113 and C157-C220. N-linked (GlcNAc...) asparagine glycans are attached at residues N95, N167, N265, N306, N361, N457, N480, and N499. Ig-like C2-type domains are found at residues 245 to 328, 333 to 409, and 416 to 501; these read PTEQ…TTIT, DLSL…ESLT, and PQIK…LNVS. Disulfide bonds link C270/C313, C354/C392, and C435/C485. The chain crosses the membrane as a helical span at residues 528-549; that stretch reads LIVGIVVGLLLAALVAGVVYWL. The Cytoplasmic segment spans residues 550–583; that stretch reads YMKKSKTASKHVNKDLGNMEENKKLEENNHKTEA. Positions 562 to 583 are disordered; that stretch reads NKDLGNMEENKKLEENNHKTEA. The span at 569 to 583 shows a compositional bias: basic and acidic residues; sequence EENKKLEENNHKTEA.

In terms of assembly, homodimer. Interacts (via extracellular domain) with CD6 (via extracellular domain). Homodimerization and interaction with CD6 involve the same region and cannot occur simultaneously. The affinity for CD6 is much higher than the affinity for self-association. Interacts (via glycosylated extracellular domain) with LGALS1 and LGALS3. Interaction with LGALS1 or LGALS3 inhibits interaction with CD6. Post-translationally, glycosylated. Detected on brain motor neurons, in differentiating retinal ganglion cells and in adult retina. Detected on leukocytes and on lymphatic endothelial cells. Detected in spleen B cells and T-cells (at protein level). Detected in adult brain and embryonic spinal cord. Expressed at high levels in the brain, and lung, and at lower levels in the liver, and the kidney, as well as by activated leukocytes.

It localises to the cell membrane. The protein resides in the cell projection. The protein localises to the axon. Its subcellular location is the dendrite. In terms of biological role, cell adhesion molecule that mediates both heterotypic cell-cell contacts via its interaction with CD6, as well as homotypic cell-cell contacts. Promotes T-cell activation and proliferation via its interactions with CD6. Contributes to the formation and maturation of the immunological synapse via its interactions with CD6. Mediates homotypic interactions with cells that express ALCAM. Mediates attachment of dendritic cells onto endothelial cells via homotypic interaction. Inhibits endothelial cell migration and promotes endothelial tube formation via homotypic interactions. Required for normal organization of the lymph vessel network. Required for normal hematopoietic stem cell engraftment in the bone marrow. Plays a role in hematopoiesis; required for normal numbers of hematopoietic stem cells in bone marrow. Promotes in vitro osteoblast proliferation and differentiation. Promotes neurite extension, axon growth and axon guidance; axons grow preferentially on surfaces that contain ALCAM. Mediates outgrowth and pathfinding for retinal ganglion cell axons. The protein is CD166 antigen (Alcam) of Mus musculus (Mouse).